The sequence spans 601 residues: Phosphomethylpyrimidine synthase (601 aa).

2 disordered regions span residues M1–I31 and A100–Q141. Positions A100–K112 are enriched in basic and acidic residues. Residues N208, M237, Y266, H302, S322–G324, D363–R366, and E402 each bind substrate. H406 lines the Zn(2+) pocket. Position 429 (Y429) interacts with substrate. H470 contacts Zn(2+). Positions 550, 553, and 558 each coordinate [4Fe-4S] cluster.

Belongs to the ThiC family. It depends on [4Fe-4S] cluster as a cofactor.

It carries out the reaction 5-amino-1-(5-phospho-beta-D-ribosyl)imidazole + S-adenosyl-L-methionine = 4-amino-2-methyl-5-(phosphooxymethyl)pyrimidine + CO + 5'-deoxyadenosine + formate + L-methionine + 3 H(+). Its pathway is cofactor biosynthesis; thiamine diphosphate biosynthesis. Functionally, catalyzes the synthesis of the hydroxymethylpyrimidine phosphate (HMP-P) moiety of thiamine from aminoimidazole ribotide (AIR) in a radical S-adenosyl-L-methionine (SAM)-dependent reaction. This chain is Phosphomethylpyrimidine synthase, found in Streptomyces avermitilis (strain ATCC 31267 / DSM 46492 / JCM 5070 / NBRC 14893 / NCIMB 12804 / NRRL 8165 / MA-4680).